Here is a 259-residue protein sequence, read N- to C-terminus: Enolase-phosphatase E1 (259 aa).

Aspartate 16 and glutamate 18 together coordinate Mg(2+). Substrate-binding positions include 151-152 (SS) and lysine 185. Position 210 (aspartate 210) interacts with Mg(2+).

The protein belongs to the HAD-like hydrolase superfamily. MasA/MtnC family. Monomer. Mg(2+) is required as a cofactor.

It localises to the cytoplasm. Its subcellular location is the nucleus. The enzyme catalyses 5-methylsulfanyl-2,3-dioxopentyl phosphate + H2O = 1,2-dihydroxy-5-(methylsulfanyl)pent-1-en-3-one + phosphate. The protein operates within amino-acid biosynthesis; L-methionine biosynthesis via salvage pathway; L-methionine from S-methyl-5-thio-alpha-D-ribose 1-phosphate: step 3/6. It functions in the pathway amino-acid biosynthesis; L-methionine biosynthesis via salvage pathway; L-methionine from S-methyl-5-thio-alpha-D-ribose 1-phosphate: step 4/6. Bifunctional enzyme that catalyzes the enolization of 2,3-diketo-5-methylthiopentyl-1-phosphate (DK-MTP-1-P) into the intermediate 2-hydroxy-3-keto-5-methylthiopentenyl-1-phosphate (HK-MTPenyl-1-P), which is then dephosphorylated to form the acireductone 1,2-dihydroxy-3-keto-5-methylthiopentene (DHK-MTPene). The sequence is that of Enolase-phosphatase E1 (enoph1) from Xenopus tropicalis (Western clawed frog).